The sequence spans 160 residues: Putative pre-16S rRNA nuclease (160 aa).

The protein belongs to the YqgF nuclease family.

The protein localises to the cytoplasm. In terms of biological role, could be a nuclease involved in processing of the 5'-end of pre-16S rRNA. This Cutibacterium acnes (strain DSM 16379 / KPA171202) (Propionibacterium acnes) protein is Putative pre-16S rRNA nuclease.